We begin with the raw amino-acid sequence, 970 residues long: Protein tweety (970 aa).

Over 1-47 the chain is Extracellular; it reads MGDYHEFTDQYKVPVIAKLLHALPHYNITFHKINSTFRPNDEIYLES. N-linked (GlcNAc...) asparagine glycosylation is found at Asn-27 and Asn-34. Residues 48–68 form a helical membrane-spanning segment; that stretch reads LGILGSVPAALLIVSLLGLLF. Over 69–89 the chain is Cytoplasmic; sequence YLMTRCCDRKPRPAHSITSLK. A helical membrane pass occupies residues 90–110; the sequence is VALSIVTVMCCAAIGLGLYGN. Residues 111-219 are Extracellular-facing; the sequence is DDLHNGLLEV…GDQWELIRWP (109 aa). Asn-136, Asn-166, and Asn-183 each carry an N-linked (GlcNAc...) asparagine glycan. The helical transmembrane segment at 220–240 threads the bilayer; the sequence is GTVATLALLLVLCAVLLVGVA. The Cytoplasmic segment spans residues 241 to 246; it reads RHSRCA. A helical transmembrane segment spans residues 247 to 267; it reads LILFSVCGLLAVTGSWLMSGL. The Extracellular segment spans residues 268–395; sequence YLSSSVAVGD…RGLCEGGLLG (128 aa). A glycan (N-linked (GlcNAc...) asparagine) is linked at Asn-359. The chain crosses the membrane as a helical span at residues 396–416; that stretch reads LVLMLIASFIAAILLTIMVWV. Topologically, residues 417 to 970 are cytoplasmic; sequence DSHTWIYIRK…DESNYAVTEL (554 aa). The span at 532-571 shows a compositional bias: low complexity; that stretch reads NAAANMPPTTQAAQQQQQQQAQQQQQQAQQQLGGPQPIYC. 3 disordered regions span residues 532 to 587, 677 to 763, and 849 to 970; these read NAAA…QHPH, RQNS…NESD, and MKAI…VTEL. The segment covering 572 to 587 has biased composition (basic residues); sequence HHPHQHPHPHPHQHPH. Low complexity-rich tracts occupy residues 689–700, 707–737, and 745–759; these read HQHPPSLHQQQQ, QQQQQLHQLKSPQQHQQQLQQHQQQQQQQHH, and QHQQQQQQHHQQQQP. The span at 852–868 shows a compositional bias: pro residues; sequence IPPPRIGTPTSPPPPVA. Composition is skewed to gly residues over residues 883 to 894 and 931 to 945; these read QNGGAVVGGGGA and NGGGGGSVGGGGGGA. Residues 961–970 show a composition bias toward polar residues; sequence DESNYAVTEL.

Belongs to the tweety family.

The protein localises to the cell membrane. In terms of biological role, non-essential protein that probably acts as a chloride channel. The chain is Protein tweety (tty) from Drosophila melanogaster (Fruit fly).